The primary structure comprises 319 residues: Transmembrane protein 121 (319 aa).

Helical transmembrane passes span 10-30 (HVCLTTLVIMGSMAVMDAYLV), 43-63 (IIVLVGDVCFLLVLRYVAVWV), 74-94 (YAMILWFLYIFVLEIKLYFIF), 112-132 (ALTLLLSVCVPGLFLLLVALD), 150-170 (LFWVALDLLDLLDMQASLWEP), 174-194 (GLPLWAEGLTFFYCYMLLLVL), and 214-234 (MMLYPVLSLATVNVVAVLARA). Over residues 277–306 (PALSLELQPPPPQRNSVPPPPPPLHGPPGR) the composition is skewed to pro residues. The segment at 277-319 (PALSLELQPPPPQRNSVPPPPPPLHGPPGRPHMSSPTRDPLDT) is disordered.

It belongs to the TMEM121 family. In terms of tissue distribution, highly expressed in heart and detected in pancreas, liver and skeletal muscle.

The protein localises to the membrane. May play a role in MAPK signaling. The chain is Transmembrane protein 121 (TMEM121) from Homo sapiens (Human).